The following is a 154-amino-acid chain: 6,7-dimethyl-8-ribityllumazine synthase (154 aa).

Residues phenylalanine 22, 57–59 (AYE), and 81–83 (AVI) contribute to the 5-amino-6-(D-ribitylamino)uracil site. Residue 86–87 (GT) coordinates (2S)-2-hydroxy-3-oxobutyl phosphate. Histidine 89 serves as the catalytic Proton donor. Phenylalanine 114 provides a ligand contact to 5-amino-6-(D-ribitylamino)uracil. Arginine 128 lines the (2S)-2-hydroxy-3-oxobutyl phosphate pocket.

The protein belongs to the DMRL synthase family. In terms of assembly, forms an icosahedral capsid composed of 60 subunits, arranged as a dodecamer of pentamers.

The enzyme catalyses (2S)-2-hydroxy-3-oxobutyl phosphate + 5-amino-6-(D-ribitylamino)uracil = 6,7-dimethyl-8-(1-D-ribityl)lumazine + phosphate + 2 H2O + H(+). Its pathway is cofactor biosynthesis; riboflavin biosynthesis; riboflavin from 2-hydroxy-3-oxobutyl phosphate and 5-amino-6-(D-ribitylamino)uracil: step 1/2. Functionally, catalyzes the formation of 6,7-dimethyl-8-ribityllumazine by condensation of 5-amino-6-(D-ribitylamino)uracil with 3,4-dihydroxy-2-butanone 4-phosphate. This is the penultimate step in the biosynthesis of riboflavin. The chain is 6,7-dimethyl-8-ribityllumazine synthase from Idiomarina loihiensis (strain ATCC BAA-735 / DSM 15497 / L2-TR).